The chain runs to 667 residues: Transketolase (667 aa).

Residue H27 coordinates substrate. Residues H67 and 115-117 (GPL) each bind thiamine diphosphate. D156 is a Mg(2+) binding site. Thiamine diphosphate is bound by residues G157 and N186. Mg(2+)-binding residues include N186 and I188. Substrate-binding residues include H262, R357, and S384. H262 is a thiamine diphosphate binding site. E411 functions as the Proton donor in the catalytic mechanism. F437 serves as a coordination point for thiamine diphosphate. Positions 461, 469, and 520 each coordinate substrate.

The protein belongs to the transketolase family. Homodimer. The cofactor is Mg(2+). It depends on Ca(2+) as a cofactor. Requires Mn(2+) as cofactor. Co(2+) is required as a cofactor. Thiamine diphosphate serves as cofactor.

The enzyme catalyses D-sedoheptulose 7-phosphate + D-glyceraldehyde 3-phosphate = aldehydo-D-ribose 5-phosphate + D-xylulose 5-phosphate. Catalyzes the transfer of a two-carbon ketol group from a ketose donor to an aldose acceptor, via a covalent intermediate with the cofactor thiamine pyrophosphate. The sequence is that of Transketolase (tkt) from Bacillus subtilis (strain 168).